A 242-amino-acid polypeptide reads, in one-letter code: Small ribosomal subunit protein eS1 (242 aa).

It belongs to the eukaryotic ribosomal protein eS1 family. Component of the small ribosomal subunit. Mature ribosomes consist of a small (40S) and a large (60S) subunit. The 40S subunit contains about 33 different proteins and 1 molecule of RNA (18S). The 60S subunit contains about 49 different proteins and 3 molecules of RNA (25S, 5.8S and 5S).

Its subcellular location is the cytoplasm. In Lodderomyces elongisporus (strain ATCC 11503 / CBS 2605 / JCM 1781 / NBRC 1676 / NRRL YB-4239) (Yeast), this protein is Small ribosomal subunit protein eS1.